The primary structure comprises 305 residues: Ribonuclease BN (305 aa).

His-63, His-65, Asp-67, His-68, His-141, Asp-212, and His-270 together coordinate Zn(2+). Asp-67 functions as the Proton acceptor in the catalytic mechanism.

Belongs to the RNase Z family. RNase BN subfamily. Homodimer. It depends on Zn(2+) as a cofactor.

Functionally, zinc phosphodiesterase, which has both exoribonuclease and endoribonuclease activities. The sequence is that of Ribonuclease BN from Proteus mirabilis (strain HI4320).